The primary structure comprises 553 residues: Syntaxin-binding protein 4 (553 aa).

Phosphoserine is present on residues serine 10, serine 12, serine 99, and serine 212. Residues 19 to 105 enclose the PDZ domain; the sequence is AFQMITIAKE…RLESAWEIAF (87 aa). Positions 291 to 417 form a coiled coil; that stretch reads SSEADEMERL…VLDCQLRKSE (127 aa). At serine 463 the chain carries Phosphoserine. Residues 496 to 529 form the WW domain; it reads DCLPYGWEEAYTADGIKYFINHVTQTTSWIHPVM.

As to quaternary structure, interacts with STX4A. Post-translationally, phosphorylated on Ser-99 by PKB/AKT2 after insulin treatment. Phosphorylation on Ser-99 abolishes the interaction with STX4A.

Its subcellular location is the cytoplasm. Functionally, plays a role in the translocation of transport vesicles from the cytoplasm to the plasma membrane. Inhibits the translocation of SLC2A4 from intracellular vesicles to the plasma membrane by STX4A binding and preventing the interaction between STX4A and VAMP2. Stimulation with insulin disrupts the interaction with STX4A, leading to increased levels of SLC2A4 at the plasma membrane. May also play a role in the regulation of insulin release by pancreatic beta cells after stimulation by glucose. This Homo sapiens (Human) protein is Syntaxin-binding protein 4 (STXBP4).